The following is a 550-amino-acid chain: Membrane protein insertase YidC (550 aa).

Residues 6-26 (LIVFIVLSFGLLFVWQEYFAP) traverse the membrane as a helical segment. Residues 30–59 (PKPVAAAVQPDGTPAPATARPADSPATGKL) are disordered. 4 consecutive transmembrane segments (helical) span residues 360–380 (WGWA…PLSA), 430–450 (LPIV…LASV), 472–492 (ILPA…PPPA), and 504–524 (PLAF…YWLV).

This sequence belongs to the OXA1/ALB3/YidC family. Type 1 subfamily. As to quaternary structure, interacts with the Sec translocase complex via SecD. Specifically interacts with transmembrane segments of nascent integral membrane proteins during membrane integration.

It is found in the cell inner membrane. Functionally, required for the insertion and/or proper folding and/or complex formation of integral membrane proteins into the membrane. Involved in integration of membrane proteins that insert both dependently and independently of the Sec translocase complex, as well as at least some lipoproteins. Aids folding of multispanning membrane proteins. This chain is Membrane protein insertase YidC, found in Laribacter hongkongensis (strain HLHK9).